A 164-amino-acid polypeptide reads, in one-letter code: C-phycoerythrin alpha chain (164 aa).

(2R,3E)-phycoerythrobilin-binding residues include C82 and C139.

The protein belongs to the phycobiliprotein family. Heterodimer of an alpha and a beta chain. Post-translationally, contains two covalently linked bilin chromophores.

The protein resides in the cellular thylakoid membrane. Its function is as follows. Light-harvesting photosynthetic bile pigment-protein from the phycobiliprotein complex. This is C-phycoerythrin alpha chain (cpeA) from Microchaete diplosiphon (Fremyella diplosiphon).